Consider the following 431-residue polypeptide: Fumarylacetoacetase fahA (431 aa).

A Ca(2+)-binding site is contributed by Asp-133. A substrate-binding site is contributed by Tyr-135. The Proton acceptor role is filled by His-140. Arg-149 contributes to the substrate binding site. Glu-209, Glu-211, and Asp-243 together coordinate Ca(2+). Asp-243 is a Mg(2+) binding site. Residues Gln-250 and Tyr-254 each contribute to the substrate site. Residues Lys-263 and Thr-267 each contribute to the Mg(2+) site. Thr-362 is a binding site for substrate. Positions 362 to 381 (TISGKENQTQGSLLEQTNGK) are enriched in polar residues. A disordered region spans residues 362–382 (TISGKENQTQGSLLEQTNGKN).

Belongs to the FAH family. The cofactor is Ca(2+). It depends on Mg(2+) as a cofactor.

The catalysed reaction is 4-fumarylacetoacetate + H2O = acetoacetate + fumarate + H(+). It functions in the pathway amino-acid degradation; L-phenylalanine degradation; acetoacetate and fumarate from L-phenylalanine: step 6/6. Functionally, fumarylacetoacetase; part of the L-tyrosine degradation gene cluster that mediates the biosynthesis of the brownish pigment pyomelanin as an alternative melanin. The 4-hydroxyphenylpyruvate dioxygenase hppD catalyzes the conversion of 4-hydroxyphenylpyruvate to homogentisic acid (HGA). The protein hmgX is crucial for this conversion and thus, probably functions as an accessory factor to mediate specific activity of hppD. The homogentisate 1,2-dioxygenase hmgA is then involved in the cleavage of the aromatic ring of HGA and its conversion to 4-maleylacetoacetate. When hmgA activity is lowered by the cell wall integrity (CWI) signaling pathway, HGA accumulates and leads to the production of pyomelanin through benzoquinone acetic acid after oxidation and polymerization. On the opposite, in non-stress conditions, both hppD and hmgA activities are balanced and HGA is degraded into 4-maleylacetoacetate. 4-maleylacetoacetate is further converted to 4-fumarylacetoacetate by the maleylacetoacetate isomerase maiA, which is degraded into fumarate and acetoacetate by the fumarylacetoacetase fahA. The sequence is that of Fumarylacetoacetase fahA from Aspergillus fumigatus (strain ATCC MYA-4609 / CBS 101355 / FGSC A1100 / Af293) (Neosartorya fumigata).